We begin with the raw amino-acid sequence, 167 residues long: Methylated-DNA--protein-cysteine methyltransferase (167 aa).

The active-site Nucleophile; methyl group acceptor is the cysteine 128.

It belongs to the MGMT family.

It localises to the cytoplasm. It catalyses the reaction a 6-O-methyl-2'-deoxyguanosine in DNA + L-cysteinyl-[protein] = S-methyl-L-cysteinyl-[protein] + a 2'-deoxyguanosine in DNA. The catalysed reaction is a 4-O-methyl-thymidine in DNA + L-cysteinyl-[protein] = a thymidine in DNA + S-methyl-L-cysteinyl-[protein]. Functionally, involved in the cellular defense against the biological effects of O6-methylguanine (O6-MeG) and O4-methylthymine (O4-MeT) in DNA. Repairs the methylated nucleobase in DNA by stoichiometrically transferring the methyl group to a cysteine residue in the enzyme. This is a suicide reaction: the enzyme is irreversibly inactivated. The protein is Methylated-DNA--protein-cysteine methyltransferase of Methanocaldococcus jannaschii (strain ATCC 43067 / DSM 2661 / JAL-1 / JCM 10045 / NBRC 100440) (Methanococcus jannaschii).